A 383-amino-acid chain; its full sequence is UDP-N-acetylglucosamine--N-acetylmuramyl-(pentapeptide) pyrophosphoryl-undecaprenol N-acetylglucosamine transferase (383 aa).

UDP-N-acetyl-alpha-D-glucosamine-binding positions include 10–12 (TGG), Asn124, Arg165, Ser190, Ile245, and Gln290. Positions 364-383 (PFGQAREPGQKPARPPDLAS) are disordered.

It belongs to the glycosyltransferase 28 family. MurG subfamily.

It is found in the cell inner membrane. The enzyme catalyses di-trans,octa-cis-undecaprenyl diphospho-N-acetyl-alpha-D-muramoyl-L-alanyl-D-glutamyl-meso-2,6-diaminopimeloyl-D-alanyl-D-alanine + UDP-N-acetyl-alpha-D-glucosamine = di-trans,octa-cis-undecaprenyl diphospho-[N-acetyl-alpha-D-glucosaminyl-(1-&gt;4)]-N-acetyl-alpha-D-muramoyl-L-alanyl-D-glutamyl-meso-2,6-diaminopimeloyl-D-alanyl-D-alanine + UDP + H(+). It functions in the pathway cell wall biogenesis; peptidoglycan biosynthesis. Functionally, cell wall formation. Catalyzes the transfer of a GlcNAc subunit on undecaprenyl-pyrophosphoryl-MurNAc-pentapeptide (lipid intermediate I) to form undecaprenyl-pyrophosphoryl-MurNAc-(pentapeptide)GlcNAc (lipid intermediate II). This is UDP-N-acetylglucosamine--N-acetylmuramyl-(pentapeptide) pyrophosphoryl-undecaprenol N-acetylglucosamine transferase from Anaeromyxobacter dehalogenans (strain 2CP-C).